A 584-amino-acid chain; its full sequence is A-type ATP synthase subunit A (584 aa).

233–240 (GPFGSGKT) contacts ATP.

This sequence belongs to the ATPase alpha/beta chains family. Has multiple subunits with at least A(3), B(3), C, D, E, F, H, I and proteolipid K(x).

Its subcellular location is the cell membrane. The catalysed reaction is ATP + H2O + 4 H(+)(in) = ADP + phosphate + 5 H(+)(out). Its function is as follows. Component of the A-type ATP synthase that produces ATP from ADP in the presence of a proton gradient across the membrane. The A chain is the catalytic subunit. This chain is A-type ATP synthase subunit A, found in Methanothermobacter thermautotrophicus (strain ATCC 29096 / DSM 1053 / JCM 10044 / NBRC 100330 / Delta H) (Methanobacterium thermoautotrophicum).